We begin with the raw amino-acid sequence, 440 residues long: 2-phosphinomethylmalate synthase (440 aa).

Residues Val-39–Asn-313 form the Pyruvate carboxyltransferase domain.

This sequence belongs to the alpha-IPM synthase/homocitrate synthase family. Homodimer. It depends on Mn(2+) as a cofactor. Co(2+) serves as cofactor.

The enzyme catalyses 3-(hydrohydroxyphosphoryl)pyruvate + acetyl-CoA + H2O = phosphinomethylmalate + CoA + H(+). It functions in the pathway secondary metabolite biosynthesis; bialaphos biosynthesis. With respect to regulation, strongly inhibited by p-chloromercuribenzoate (pCMB), iodoacetamide (IA) and EDTA. Involved in the biosynthesis of phosphinothricin tripeptide (PTT), also known as bialaphos (BA), a natural-product antibiotic and potent herbicide. Catalyzes the condensation berween phosphinopyruvic acid (PPA), an analog of oxalacetic acid, and acetyl-CoA to form R-2-phosphinomethylmalic acid (PMM). Can also act on oxaloacetate, but shows no activity when acetyl-CoA is substituted by propionyl-CoA or butyryl-CoA. The protein is 2-phosphinomethylmalate synthase of Streptomyces hygroscopicus.